We begin with the raw amino-acid sequence, 511 residues long: ATP synthase subunit alpha (511 aa).

169 to 176 (GDRQTGKT) lines the ATP pocket.

It belongs to the ATPase alpha/beta chains family. In terms of assembly, F-type ATPases have 2 components, CF(1) - the catalytic core - and CF(0) - the membrane proton channel. CF(1) has five subunits: alpha(3), beta(3), gamma(1), delta(1), epsilon(1). CF(0) has three main subunits: a(1), b(2) and c(9-12). The alpha and beta chains form an alternating ring which encloses part of the gamma chain. CF(1) is attached to CF(0) by a central stalk formed by the gamma and epsilon chains, while a peripheral stalk is formed by the delta and b chains.

It localises to the cell inner membrane. It catalyses the reaction ATP + H2O + 4 H(+)(in) = ADP + phosphate + 5 H(+)(out). Functionally, produces ATP from ADP in the presence of a proton gradient across the membrane. The alpha chain is a regulatory subunit. The polypeptide is ATP synthase subunit alpha (Bartonella henselae (strain ATCC 49882 / DSM 28221 / CCUG 30454 / Houston 1) (Rochalimaea henselae)).